The sequence spans 582 residues: Aspartate--tRNA ligase (582 aa).

Glu-174 contributes to the L-aspartate binding site. Residues 198 to 201 (QITK) form an aspartate region. Arg-220 lines the L-aspartate pocket. Residues 220-222 (RDE) and Gln-229 contribute to the ATP site. Position 443 (His-443) interacts with L-aspartate. Glu-477 contacts ATP. Position 484 (Arg-484) interacts with L-aspartate. 529-532 (GLDR) serves as a coordination point for ATP.

The protein belongs to the class-II aminoacyl-tRNA synthetase family. Type 1 subfamily. As to quaternary structure, homodimer.

The protein resides in the cytoplasm. The enzyme catalyses tRNA(Asp) + L-aspartate + ATP = L-aspartyl-tRNA(Asp) + AMP + diphosphate. Functionally, catalyzes the attachment of L-aspartate to tRNA(Asp) in a two-step reaction: L-aspartate is first activated by ATP to form Asp-AMP and then transferred to the acceptor end of tRNA(Asp). The chain is Aspartate--tRNA ligase from Streptococcus pyogenes serotype M6 (strain ATCC BAA-946 / MGAS10394).